We begin with the raw amino-acid sequence, 209 residues long: Outer-membrane lipoprotein carrier protein (209 aa).

A signal peptide spans 1–23 (MKNLLKKSLLGLAFLSLNGFAFA).

This sequence belongs to the LolA family. In terms of assembly, monomer.

The protein localises to the periplasm. Participates in the translocation of lipoproteins from the inner membrane to the outer membrane. Only forms a complex with a lipoprotein if the residue after the N-terminal Cys is not an aspartate (The Asp acts as a targeting signal to indicate that the lipoprotein should stay in the inner membrane). The chain is Outer-membrane lipoprotein carrier protein from Glaesserella parasuis serovar 5 (strain SH0165) (Haemophilus parasuis).